A 201-amino-acid polypeptide reads, in one-letter code: uncharacterized protein (201 aa).

Disordered regions lie at residues 46–80 (PLVNPKYDNPQIESAELDGSQNDNYSTDTSQSYDE) and 143–201 (SSTS…ANPA). Composition is skewed to polar residues over residues 64-78 (GSQNDNYSTDTSQSY) and 143-167 (SSTSAKTIQNDKPATDVSLGSNSPA).

This is an uncharacterized protein from Legionella pneumophila.